Here is a 255-residue protein sequence, read N- to C-terminus: Ribonuclease HII (255 aa).

An RNase H type-2 domain is found at 72-255 (AIICGIDEVG…KSFEPIKSLL (184 aa)). A divalent metal cation-binding residues include D78, E79, and D170.

The protein belongs to the RNase HII family. Mn(2+) is required as a cofactor. It depends on Mg(2+) as a cofactor.

It is found in the cytoplasm. It catalyses the reaction Endonucleolytic cleavage to 5'-phosphomonoester.. Its function is as follows. Endonuclease that specifically degrades the RNA of RNA-DNA hybrids. This Staphylococcus aureus (strain Mu3 / ATCC 700698) protein is Ribonuclease HII.